Consider the following 682-residue polypeptide: Potassium-transporting ATPase ATP-binding subunit (682 aa).

4 consecutive transmembrane segments (helical) span residues 34 to 54, 62 to 82, 219 to 239, and 254 to 274; these read PVMF…IAMA, ALFS…ANFA, IALT…TATL, and VLVA…LSAI. The active-site 4-aspartylphosphate intermediate is aspartate 307. ATP contacts are provided by residues aspartate 344, glutamate 348, 377–384, and lysine 395; that span reads FTAQSRMS. Mg(2+) is bound by residues aspartate 518 and aspartate 522. Helical transmembrane passes span 588–608, 616–636, and 656–676; these read FAII…LNIM, AILS…PLAL, and IYGL…DLLL.

Belongs to the cation transport ATPase (P-type) (TC 3.A.3) family. Type IA subfamily. As to quaternary structure, the system is composed of three essential subunits: KdpA, KdpB and KdpC.

The protein resides in the cell inner membrane. The catalysed reaction is K(+)(out) + ATP + H2O = K(+)(in) + ADP + phosphate + H(+). In terms of biological role, part of the high-affinity ATP-driven potassium transport (or Kdp) system, which catalyzes the hydrolysis of ATP coupled with the electrogenic transport of potassium into the cytoplasm. This subunit is responsible for energy coupling to the transport system and for the release of the potassium ions to the cytoplasm. This chain is Potassium-transporting ATPase ATP-binding subunit, found in Escherichia coli O8 (strain IAI1).